The following is a 239-amino-acid chain: MNRPSGRAADQLRPIRITRHYTKHAEGSVLVEFGDTKVICTVSAESGVPRFLKGQGQGWLTAEYGMLPRSTGERNQREASRGKQGGRTLEIQRLIGRSLRAALDLSKLGENTLYIDCDVIQADGGTRTASITGATVALIDALAVLKKRGALKGNPLKQMVAAVSVGIYQGVPVLDLDYLEDSAAETDLNVVMTDSGGFIEVQGTAEGAPFRPAELNAMLELAQQGMQELFELQRAALAE.

Residues Arg87 and 125-127 (GTR) each bind phosphate.

Belongs to the RNase PH family. Homohexameric ring arranged as a trimer of dimers.

The catalysed reaction is tRNA(n+1) + phosphate = tRNA(n) + a ribonucleoside 5'-diphosphate. Functionally, phosphorolytic 3'-5' exoribonuclease that plays an important role in tRNA 3'-end maturation. Removes nucleotide residues following the 3'-CCA terminus of tRNAs; can also add nucleotides to the ends of RNA molecules by using nucleoside diphosphates as substrates, but this may not be physiologically important. Probably plays a role in initiation of 16S rRNA degradation (leading to ribosome degradation) during starvation. In Pseudomonas paraeruginosa (strain DSM 24068 / PA7) (Pseudomonas aeruginosa (strain PA7)), this protein is Ribonuclease PH.